Consider the following 473-residue polypeptide: Photosystem II CP43 reaction center protein (473 aa).

Residues 1 to 14 (MKILYSQRRFYHVE) constitute a propeptide that is removed on maturation. The next 5 membrane-spanning stretches (helical) occupy residues 69-93 (LFEV…PHLA), 134-155 (LIGP…RDKN), 178-200 (KAMF…RYIN), 255-275 (KPFG…LSYS), and 291-312 (WYNN…ASQA). Glu367 is a [CaMn4O5] cluster binding site. The chain crosses the membrane as a helical span at residues 447-471 (RARAAAAGFEKGINRENEPVLSMKL).

It belongs to the PsbB/PsbC family. PsbC subfamily. In terms of assembly, PSII is composed of 1 copy each of membrane proteins PsbA, PsbB, PsbC, PsbD, PsbE, PsbF, PsbH, PsbI, PsbJ, PsbK, PsbL, PsbM, PsbT, PsbY, PsbZ, Psb30/Ycf12, at least 3 peripheral proteins of the oxygen-evolving complex and a large number of cofactors. It forms dimeric complexes. Binds multiple chlorophylls and provides some of the ligands for the Ca-4Mn-5O cluster of the oxygen-evolving complex. It may also provide a ligand for a Cl- that is required for oxygen evolution. PSII binds additional chlorophylls, carotenoids and specific lipids. is required as a cofactor.

The protein localises to the plastid. The protein resides in the chloroplast thylakoid membrane. Functionally, one of the components of the core complex of photosystem II (PSII). It binds chlorophyll and helps catalyze the primary light-induced photochemical processes of PSII. PSII is a light-driven water:plastoquinone oxidoreductase, using light energy to abstract electrons from H(2)O, generating O(2) and a proton gradient subsequently used for ATP formation. This chain is Photosystem II CP43 reaction center protein, found in Galdieria sulphuraria (Red alga).